The sequence spans 922 residues: NEDD4-like E3 ubiquitin-protein ligase WWP1 (922 aa).

The 116-residue stretch at 1-116 folds into the C2 domain; that stretch reads MATASPRSDT…IHNRKLERVK (116 aa). Polar residues-rich tracts occupy residues 210–219, 243–278, 286–302, 314–323, and 340–351; these read GDNTPSSPSQ, NGES…STTV, ILTS…TSAE, DTSNSRSSSA, and RQQSGNANTETL. Residues 210–388 form a disordered region; it reads GDNTPSSPSQ…RPQPLPPGWE (179 aa). 4 consecutive WW domains span residues 349–382, 381–414, 456–489, and 496–529; these read ETLP…RPQP, QPLP…RPTM, GPLP…DPRT, and EPLP…DPRN. Residues 349-531 are required for interaction with and ubiquitination of AMOTL2. Required for interaction with YAP1; it reads ETLPSGWEQR…TTFKDPRNGK (183 aa). The 335-residue stretch at 588–922 folds into the HECT domain; it reads KPYDLRRRLY…IEETEGFGQE (335 aa). The Glycyl thioester intermediate role is filled by Cys890.

Interacts with the Crumbs complex components PALS1 and PATJ; interaction with the Crumbs complex is enhanced by WWP1's interaction with AMOTL2 and facilitates WWP1 localization to the plasma membrane. Interaction with the Crumbs complex promotes WWP1 monoubiquitination of AMOTL2, which activates the Hippo signaling pathway. Binds KLF2 and HIVEP3. Binds SCNN1A, SCNN1B, SCNN1G, WBP1, WBP2, DRPLA and adenovirus type 2 PIII. Interacts with RNF11. Interacts with SPART. Interacts with ERBB4 isoforms JM-B CYT-1 and JM-A CYT-1. Interacts with SMAD1, SMAD2, SMAD3, SMAD5, SMAD6, SMAD7, TGFBR1 and TGFBR2. Associates with the TGFBR1:TGFBR2 receptor complex in presence of SMAD7. Interacts with SKIL isoform 1. Interacts with TP63 isoform 1 and isoform 2. Interacts with STAMBP and RNF11. Interacts with NDFIP1 and NDFIP2; this interaction activates the E3 ubiquitin-protein ligase. Interacts with TGIF. Interacts (via WW domains) with ARRDC1, ARRDC2 and ARRDC3. In terms of assembly, (Microbial infection) Interacts with HTLV-1 protein Gag. As to quaternary structure, (Microbial infection) Interacts with ebola virus protein VP40. Auto-ubiquitinated and ubiquitinated by RNF11. In terms of tissue distribution, detected in heart, placenta, pancreas, kidney, liver, skeletal muscle, bone marrow, fetal brain, and at much lower levels in adult brain and lung. Isoform 1 and isoform 5 predominate in all tissues tested, except in testis and bone marrow, where isoform 5 is expressed at much higher levels than isoform 1.

The protein resides in the cytoplasm. It localises to the cell membrane. It is found in the nucleus. Its subcellular location is the cell junction. The catalysed reaction is S-ubiquitinyl-[E2 ubiquitin-conjugating enzyme]-L-cysteine + [acceptor protein]-L-lysine = [E2 ubiquitin-conjugating enzyme]-L-cysteine + N(6)-ubiquitinyl-[acceptor protein]-L-lysine.. It functions in the pathway protein modification; protein ubiquitination. Its activity is regulated as follows. Activated by NDFIP1- and NDFIP2-binding. E3 ubiquitin-protein ligase which accepts ubiquitin from an E2 ubiquitin-conjugating enzyme in the form of a thioester and then directly transfers the ubiquitin to targeted substrates. Ubiquitinates ERBB4 isoforms JM-A CYT-1 and JM-B CYT-1, KLF2, KLF5 and TP63 and promotes their proteasomal degradation. Ubiquitinates RNF11 without targeting it for degradation. Ubiquitinates and promotes degradation of TGFBR1; the ubiquitination is enhanced by SMAD7. Ubiquitinates SMAD6 and SMAD7. Ubiquitinates and promotes degradation of SMAD2 in response to TGF-beta signaling, which requires interaction with TGIF. Activates the Hippo signaling pathway in response to cell contact inhibition and recruitment to the Crumbs complex at the cell membrane. Monoubiquitinates AMOTL2 which facilitates its interaction with and activation of LATS2. LATS2 then phosphorylates YAP1, excluding it from the nucleus and therefore ultimately represses YAP1-driven transcription of target genes. The protein is NEDD4-like E3 ubiquitin-protein ligase WWP1 (WWP1) of Homo sapiens (Human).